A 101-amino-acid chain; its full sequence is Small ribosomal subunit protein uS14 (101 aa).

It belongs to the universal ribosomal protein uS14 family. In terms of assembly, part of the 30S ribosomal subunit. Contacts proteins S3 and S10.

In terms of biological role, binds 16S rRNA, required for the assembly of 30S particles and may also be responsible for determining the conformation of the 16S rRNA at the A site. The polypeptide is Small ribosomal subunit protein uS14 (Burkholderia mallei (strain NCTC 10247)).